An 83-amino-acid chain; its full sequence is Protein ShK-like4 (83 aa).

The first 21 residues, 1-21, serve as a signal peptide directing secretion; sequence MDTRVIAVLFVAIMVLSSTNA. The propeptide occupies 22 to 48; that stretch reads LPKQKGSYKNMNHADFLKGLDRASSKR. Disulfide bonds link C50-C82, C57-C75, and C67-C79. Positions 50-83 constitute a ShKT domain; sequence CRDSHWSCFFQSNYEDICSTAQAEECALSCGLCE.

Post-translationally, contains 3 disulfide bonds. As to expression, expressed in various neurons (ectodermal sensory cells) (in planulae and primary polyps). Not expressed in nematocytes.

Functionally, probable neuropeptide. This Nematostella vectensis (Starlet sea anemone) protein is Protein ShK-like4.